The following is a 131-amino-acid chain: SPbeta prophage-derived uncharacterized protein YosD (131 aa).

The disordered stretch occupies residues 102–131 (EHNNKKAKNNDTQNQRQIKTSWWQRLTKKD). A compositionally biased stretch (polar residues) spans 111 to 125 (NDTQNQRQIKTSWWQ).

The polypeptide is SPbeta prophage-derived uncharacterized protein YosD (yosD) (Bacillus subtilis (strain 168)).